The sequence spans 1168 residues: Carbamoyl phosphate synthase arginine-specific large chain, mitochondrial (1168 aa).

A mitochondrion-targeting transit peptide spans 1–51; that stretch reads MLSTVHKAGRAPALLRHGRRVPVQASQLRALTSGAQNTSIFQTQANAAQRL. Residues 86 to 483 form a carboxyphosphate synthetic domain region; the sequence is RDHVDVKKVL…SFQKAIRQVD (398 aa). ATP contacts are provided by residues R213, 243–298, R253, G259, G260, K290, L292, E297, G323, I324, H325, Q366, and E380; that span reads ANKI…WKEV. The region spanning 217–409 is the ATP-grasp 1 domain; that stretch reads AKALEEINIP…LAYTAAKIGL (193 aa). Mg(2+)-binding residues include Q366, E380, and N382. Residues Q366, E380, and N382 each contribute to the Mn(2+) site. Positions 484–628 are oligomerization domain; sequence PRFVGFQGDK…YTTYNASSHD (145 aa). Residues 629 to 1017 are carbamoyl phosphate synthetic domain; the sequence is VTFEDKGTVI…AYWASLQSAM (389 aa). Residues 754–951 enclose the ATP-grasp 2 domain; the sequence is SEILDSIGVD…FIDAATKALV (198 aa). ATP contacts are provided by residues 780 to 837, R790, K829, I831, E836, G861, V862, H863, S864, Q904, and E922; that span reads AEEV…AQEI. Residues Q904, E922, and N924 each coordinate Mg(2+). Mn(2+)-binding residues include Q904, E922, and N924. An allosteric domain region spans residues 1018–1152; it reads NFRVPEPGEG…AEKLPRPEGI (135 aa). Residues 1019 to 1168 enclose the MGS-like domain; sequence FRVPEPGEGL…WSEFIGGKPL (150 aa).

This sequence belongs to the CarB family. Heterodimer composed of 2 chains; the small (or glutamine) chain promotes the hydrolysis of glutamine to ammonia, which is used by the large (or ammonia) chain to synthesize carbamoyl phosphate. Requires Mg(2+) as cofactor. The cofactor is Mn(2+).

It is found in the mitochondrion matrix. It catalyses the reaction hydrogencarbonate + L-glutamine + 2 ATP + H2O = carbamoyl phosphate + L-glutamate + 2 ADP + phosphate + 2 H(+). It carries out the reaction hydrogencarbonate + NH4(+) + 2 ATP = carbamoyl phosphate + 2 ADP + phosphate + 2 H(+). It functions in the pathway amino-acid biosynthesis; L-arginine biosynthesis; carbamoyl phosphate from bicarbonate: step 1/1. Functionally, large subunit of the arginine-specific carbamoyl phosphate synthase (CPSase). CPSase catalyzes the formation of carbamoyl phosphate from the ammonia moiety of glutamine, hydrogencarbonate, and phosphate donated by ATP, the first step of the arginine biosynthetic pathway. The large subunit (synthetase) binds the substrates ammonia (free or transferred from glutamine from the small subunit), hydrogencarbonate and ATP and carries out an ATP-coupled ligase reaction, activating hydrogencarbonate by forming carboxy phosphate which reacts with ammonia to form carbamoyl phosphate. This chain is Carbamoyl phosphate synthase arginine-specific large chain, mitochondrial (arg-3), found in Neurospora crassa (strain ATCC 24698 / 74-OR23-1A / CBS 708.71 / DSM 1257 / FGSC 987).